Reading from the N-terminus, the 287-residue chain is Phosphatidylserine decarboxylase proenzyme (287 aa).

Residues D90, H147, and S252 each act as charge relay system; for autoendoproteolytic cleavage activity in the active site. The active-site Schiff-base intermediate with substrate; via pyruvic acid; for decarboxylase activity is S252. S252 carries the pyruvic acid (Ser); by autocatalysis modification.

This sequence belongs to the phosphatidylserine decarboxylase family. PSD-B subfamily. Prokaryotic type I sub-subfamily. As to quaternary structure, heterodimer of a large membrane-associated beta subunit and a small pyruvoyl-containing alpha subunit. Pyruvate is required as a cofactor. In terms of processing, is synthesized initially as an inactive proenzyme. Formation of the active enzyme involves a self-maturation process in which the active site pyruvoyl group is generated from an internal serine residue via an autocatalytic post-translational modification. Two non-identical subunits are generated from the proenzyme in this reaction, and the pyruvate is formed at the N-terminus of the alpha chain, which is derived from the carboxyl end of the proenzyme. The autoendoproteolytic cleavage occurs by a canonical serine protease mechanism, in which the side chain hydroxyl group of the serine supplies its oxygen atom to form the C-terminus of the beta chain, while the remainder of the serine residue undergoes an oxidative deamination to produce ammonia and the pyruvoyl prosthetic group on the alpha chain. During this reaction, the Ser that is part of the protease active site of the proenzyme becomes the pyruvoyl prosthetic group, which constitutes an essential element of the active site of the mature decarboxylase.

It is found in the cell membrane. It catalyses the reaction a 1,2-diacyl-sn-glycero-3-phospho-L-serine + H(+) = a 1,2-diacyl-sn-glycero-3-phosphoethanolamine + CO2. The protein operates within phospholipid metabolism; phosphatidylethanolamine biosynthesis; phosphatidylethanolamine from CDP-diacylglycerol: step 2/2. In terms of biological role, catalyzes the formation of phosphatidylethanolamine (PtdEtn) from phosphatidylserine (PtdSer). This Pseudomonas putida (strain GB-1) protein is Phosphatidylserine decarboxylase proenzyme.